The sequence spans 587 residues: Trihelix transcription factor GTL1 (587 aa).

Composition is skewed to gly residues over residues 1–10 (MEQGGGGGGN) and 41–54 (GGLGGGGGGGGGGS). Positions 1 to 63 (MEQGGGGGGN…SASSSSGNRW (63 aa)) are disordered. A Myb-like 1 domain is found at 55–119 (ASSSSGNRWP…KCKEKFENVQ (65 aa)). The Nuclear localization signal 1 motif lies at 96–103 (SRKLLELG). The segment covering 173-194 (SSSPFPVFSQPQPQTQTQPPQT) has biased composition (low complexity). The disordered stretch occupies residues 173–264 (SSSPFPVFSQ…RKRGNRGGGG (92 aa)). A compositionally biased stretch (pro residues) spans 201–210 (PTPPPLPLPS). Over residues 221–232 (SSHSSSTASGMG) the composition is skewed to low complexity. Positions 233 to 242 (SDDDDDDMDV) are enriched in acidic residues. Residues 285–328 (QRSFLEALEKREQERLDREEAWKRQEMARLAREHEVMSQERAAS) adopt a coiled-coil conformation. A disordered region spans residues 348–435 (QLPPSLSSQP…EQSSLPSSSR (88 aa)). Residues 356–366 (QPPPPYQPPPA) are compositionally biased toward pro residues. Low complexity-rich tracts occupy residues 379-395 (AQSQSQQPIMAIPQQQI) and 411-434 (QKQQQQPQQEMVMSSEQSSLPSSS). The Myb-like 2 domain maps to 434–492 (SRWPKAEILALINLRSGMEPRYQDNVPKGLLWEEISTSMKRMGYNRNAKRCKEKWENIN). A Nuclear localization signal 2 motif is present at residues 472-479 (MKRMGYNR). The tract at residues 530–587 (GGGSSTSGLPQDQKQSPVTAMKPPQEGLVNVQQTHGSASTEEEEPIEESPQGTEKKTL) is disordered. 2 stretches are compositionally biased toward polar residues: residues 538 to 547 (LPQDQKQSPV) and 559 to 568 (NVQQTHGSAS).

As to expression, mostly expressed in siliques, and, to a lower extent, in growing root hairs, leaves, stems, and flowers. Present in abaxial epidermal cells, predominantly in guard cells, pavement cells, and meristemoids.

It is found in the nucleus. Its function is as follows. Transcription repressor that binds specific DNA sequence such as GT3 box 5'-GGTAAA-3' in the SDD1 promoter. Negative regulator of water use efficiency (WUE) via the promotion of stomatal density and distribution by the transcription repression of SDD1. Regulates the expression of several cell cycle genes and endoreduplication, especially in trichomes where it prevents ploidy-dependent plant cell growth. Regulates negatively root hair growth by directly binding RSL4 promoter and repressing RSL4 expression. This chain is Trihelix transcription factor GTL1, found in Arabidopsis thaliana (Mouse-ear cress).